The chain runs to 147 residues: Hemoglobin subunit gamma (147 aa).

Residues 3–147 form the Globin domain; sequence HFTVEEKAVI…VAIALAHKYH (145 aa). Histidine 64 and histidine 93 together coordinate heme b.

Belongs to the globin family. In terms of assembly, heterotetramer of two alpha chains and two gamma chains in fetal hemoglobin (Hb F). In terms of tissue distribution, red blood cells.

In terms of biological role, gamma chains make up the fetal hemoglobin F, in combination with alpha chains. The chain is Hemoglobin subunit gamma (HBG) from Cheirogaleus medius (Fat-tailed dwarf lemur).